A 168-amino-acid polypeptide reads, in one-letter code: Protein-export protein SecB (168 aa).

This sequence belongs to the SecB family. As to quaternary structure, homotetramer, a dimer of dimers. One homotetramer interacts with 1 SecA dimer.

The protein resides in the cytoplasm. In terms of biological role, one of the proteins required for the normal export of preproteins out of the cell cytoplasm. It is a molecular chaperone that binds to a subset of precursor proteins, maintaining them in a translocation-competent state. It also specifically binds to its receptor SecA. The sequence is that of Protein-export protein SecB from Glaesserella parasuis serovar 5 (strain SH0165) (Haemophilus parasuis).